Reading from the N-terminus, the 354-residue chain is GTPase Obg (354 aa).

One can recognise an Obg domain in the interval 1 to 159 (MKFLDQCKIY…RWIWLRLKLI (159 aa)). One can recognise an OBG-type G domain in the interval 160–328 (ADVGLVGLPN…LLRAAYKQVR (169 aa)). GTP contacts are provided by residues 166–173 (GLPNAGKS), 191–195 (FTTLT), 213–216 (DIPG), 280–283 (NKID), and 309–311 (SGV). Mg(2+) is bound by residues Ser-173 and Thr-193. A compositionally biased stretch (acidic residues) spans 335–345 (EEEIDDDEDHV). Positions 335-354 (EEEIDDDEDHVDETPGGWTP) are disordered.

Belongs to the TRAFAC class OBG-HflX-like GTPase superfamily. OBG GTPase family. As to quaternary structure, monomer. Mg(2+) is required as a cofactor.

Its subcellular location is the cytoplasm. Functionally, an essential GTPase which binds GTP, GDP and possibly (p)ppGpp with moderate affinity, with high nucleotide exchange rates and a fairly low GTP hydrolysis rate. Plays a role in control of the cell cycle, stress response, ribosome biogenesis and in those bacteria that undergo differentiation, in morphogenesis control. The polypeptide is GTPase Obg (Caulobacter vibrioides (strain ATCC 19089 / CIP 103742 / CB 15) (Caulobacter crescentus)).